Here is a 1076-residue protein sequence, read N- to C-terminus: Nuclear factor of activated T-cells, cytoplasmic 3 (1076 aa).

Thr2 bears the N-acetylthreonine mark. The segment at 110-115 is calcineurin-binding; that stretch reads PSIQIT. Positions 206 to 307 are disordered; sequence LGSPLTSPGG…PGHSPRGSVT (102 aa). 2 consecutive repeat copies span residues 208-224 and 237-253. A 3 X SP repeats region spans residues 208-309; the sequence is SPLTSPGGSP…HSPRGSVTED (102 aa). A compositionally biased stretch (polar residues) spans 237–254; it reads SPRQSPCHSPRSSITDEN. Positions 257–271 are enriched in low complexity; it reads SPRPASGPSSRPTSP. Residues 274–276 carry the Nuclear localization signal motif; sequence KRR. The stretch at 293-309 is repeat 3; sequence SPVPSPGHSPRGSVTED. The residue at position 345 (Ser345) is a Phosphoserine. The segment at 359-390 is disordered; the sequence is CSDDQGSLSPSRETSVDDGLGSQYPLKKDSSG. Over residues 362 to 371 the composition is skewed to polar residues; sequence DQGSLSPSRE. Ser373 carries the post-translational modification Phosphoserine. Residues 416–597 form the RHD domain; sequence SSLPPLDWPL…IPVECSQRSA (182 aa). The DNA-binding element occupies 445 to 452; the sequence is RAHYETEG. The Nuclear localization signal motif lies at 687–689; it reads KRK. Disordered regions lie at residues 700 to 744 and 863 to 987; these read PVLM…ALSA and GHLL…GGLS. Residues 713–722 show a composition bias toward low complexity; it reads LSSVPSLPVP. 2 stretches are compositionally biased toward polar residues: residues 724-734 and 888-911; these read SAQTQRPSSDT and SAGQRSLSSPVAAQVTGQPSSHLQ. 2 stretches are compositionally biased toward low complexity: residues 917–939 and 946–965; these read PSHPGSATAASPAASHALSSSPI and QLQSMPYQSPSSGTASSPSP. The segment covering 970–981 has biased composition (polar residues); it reads HSGQHSTQAQST. A Nuclear export signal motif is present at residues 1032-1041; the sequence is TLDDVNEIIG. Residues 1049–1076 form a disordered region; that stretch reads VSQGPEVIRDAPLPGPESPDVMSSNSAQ. Position 1066 is a phosphoserine (Ser1066).

In terms of assembly, NFATC proteins bind to DNA as monomers. Member of the multicomponent NFATC transcription complex that consists of at least two components, a pre-existing cytoplasmic component NFATC2 and an inducible nuclear component NFATC1. Other members such as NFATC4, or members of the activating protein-1 family, MAF, GATA4 and Cbp/p300 can also bind the complex. Component of a promoter-binding complex composed of STAT3, NFATC3 and NFATC4; complex formation is enhanced by calcineurin. Interacts with TRIM17; this interaction prevents NFATC3 nuclear localization. Interacts with and ubiquitinated by STUB1/CHIP; HSPA1A/HSP70 is required as a co-chaperone. In terms of processing, phosphorylated by NFATC-kinase; dephosphorylated by calcineurin. Ubiquitinated by STUB1/CHIP, leading to proteasomal degradation. Expressed in cardiomyocytes (at protein level).

The protein localises to the cytoplasm. The protein resides in the nucleus. In terms of biological role, acts as a regulator of transcriptional activation. Binds to the TNFSF11/RANKL promoter region and promotes TNFSF11 transcription. Binding to the TNFSF11 promoter region is increased by high levels of Ca(2+) which induce NFATC3 expression and may lead to regulation of TNFSF11 expression in osteoblasts. Plays a role in promoting mesenteric arterial wall remodeling in response to the intermittent hypoxia-induced increase in EDN1 and ROCK signaling. As a result NFATC3 colocalizes with F-actin filaments, translocates to the nucleus and promotes transcription of the smooth muscle hypertrophy and differentiation marker ACTA2. Promotes lipopolysaccharide-induced apoptosis and hypertrophy in cardiomyocytes. Following JAK/STAT signaling activation and as part of a complex with NFATC4 and STAT3, binds to the alpha-beta E4 promoter region of CRYAB and activates transcription in cardiomyocytes. In conjunction with NFATC4, involved in embryonic heart development via maintenance of cardiomyocyte survival, proliferation and differentiation. Plays a role in the inducible expression of cytokine genes in T-cells, especially in the induction of the IL-2. Required for thymocyte maturation during DN3 to DN4 transition and during positive selection. Positively regulates macrophage-derived polymicrobial clearance, via binding to the promoter region and promoting transcription of NOS2 resulting in subsequent generation of nitric oxide. Involved in Ca(2+)-mediated transcriptional responses upon Ca(2+) influx via ORAI1 CRAC channels. This Rattus norvegicus (Rat) protein is Nuclear factor of activated T-cells, cytoplasmic 3.